The chain runs to 69 residues: MKYTVIITKDEDGYYVVNVPALPGCFTQGKTKKEALINIKEAIRAYIESLKKHNEKIPRDNAEEITVHA.

Belongs to the UPF0150 family.

The sequence is that of UPF0150 protein Ta0767 from Thermoplasma acidophilum (strain ATCC 25905 / DSM 1728 / JCM 9062 / NBRC 15155 / AMRC-C165).